Consider the following 351-residue polypeptide: UDP-N-acetylglucosamine--N-acetylmuramyl-(pentapeptide) pyrophosphoryl-undecaprenol N-acetylglucosamine transferase (351 aa).

UDP-N-acetyl-alpha-D-glucosamine contacts are provided by residues 13–15, asparagine 125, arginine 161, serine 189, isoleucine 241, 260–265, and glutamine 285; these read TGG and ALTVCE.

This sequence belongs to the glycosyltransferase 28 family. MurG subfamily.

Its subcellular location is the cell inner membrane. It catalyses the reaction di-trans,octa-cis-undecaprenyl diphospho-N-acetyl-alpha-D-muramoyl-L-alanyl-D-glutamyl-meso-2,6-diaminopimeloyl-D-alanyl-D-alanine + UDP-N-acetyl-alpha-D-glucosamine = di-trans,octa-cis-undecaprenyl diphospho-[N-acetyl-alpha-D-glucosaminyl-(1-&gt;4)]-N-acetyl-alpha-D-muramoyl-L-alanyl-D-glutamyl-meso-2,6-diaminopimeloyl-D-alanyl-D-alanine + UDP + H(+). It participates in cell wall biogenesis; peptidoglycan biosynthesis. Cell wall formation. Catalyzes the transfer of a GlcNAc subunit on undecaprenyl-pyrophosphoryl-MurNAc-pentapeptide (lipid intermediate I) to form undecaprenyl-pyrophosphoryl-MurNAc-(pentapeptide)GlcNAc (lipid intermediate II). This is UDP-N-acetylglucosamine--N-acetylmuramyl-(pentapeptide) pyrophosphoryl-undecaprenol N-acetylglucosamine transferase from Haemophilus influenzae (strain PittEE).